Reading from the N-terminus, the 129-residue chain is Integration host factor subunit alpha (129 aa).

The segment at 87–129 (SALNGEAPPEDHAEIDAREEAAADAAEARGEDFDEEGMEDMEG) is disordered. Residues 95–117 (PEDHAEIDAREEAAADAAEARGE) are compositionally biased toward basic and acidic residues. The segment covering 118 to 129 (DFDEEGMEDMEG) has biased composition (acidic residues).

It belongs to the bacterial histone-like protein family. Heterodimer of an alpha and a beta chain.

This protein is one of the two subunits of integration host factor, a specific DNA-binding protein that functions in genetic recombination as well as in transcriptional and translational control. It is necessary for normal cell growth and the production of carotenoids in response to light. The protein is Integration host factor subunit alpha (ihfA) of Myxococcus xanthus.